Here is a 184-residue protein sequence, read N- to C-terminus: ATP synthase subunit b, chloroplastic (184 aa).

A helical transmembrane segment spans residues 31–53 (LINLSVVLGVLIYFGKGVLSNLL).

This sequence belongs to the ATPase B chain family. F-type ATPases have 2 components, F(1) - the catalytic core - and F(0) - the membrane proton channel. F(1) has five subunits: alpha(3), beta(3), gamma(1), delta(1), epsilon(1). F(0) has four main subunits: a(1), b(1), b'(1) and c(10-14). The alpha and beta chains form an alternating ring which encloses part of the gamma chain. F(1) is attached to F(0) by a central stalk formed by the gamma and epsilon chains, while a peripheral stalk is formed by the delta, b and b' chains.

Its subcellular location is the plastid. The protein resides in the chloroplast thylakoid membrane. Functionally, f(1)F(0) ATP synthase produces ATP from ADP in the presence of a proton or sodium gradient. F-type ATPases consist of two structural domains, F(1) containing the extramembraneous catalytic core and F(0) containing the membrane proton channel, linked together by a central stalk and a peripheral stalk. During catalysis, ATP synthesis in the catalytic domain of F(1) is coupled via a rotary mechanism of the central stalk subunits to proton translocation. Its function is as follows. Component of the F(0) channel, it forms part of the peripheral stalk, linking F(1) to F(0). The polypeptide is ATP synthase subunit b, chloroplastic (Cycas taitungensis (Prince sago)).